Consider the following 127-residue polypeptide: Glycine cleavage system H protein (127 aa).

One can recognise a Lipoyl-binding domain in the interval 22-104; the sequence is KVRIGITDFA…YEKAWMIVIE (83 aa). The residue at position 63 (lysine 63) is an N6-lipoyllysine.

The protein belongs to the GcvH family. In terms of assembly, the glycine cleavage system is composed of four proteins: P, T, L and H. (R)-lipoate is required as a cofactor.

Its function is as follows. The glycine cleavage system catalyzes the degradation of glycine. The H protein shuttles the methylamine group of glycine from the P protein to the T protein. In terms of biological role, is also involved in protein lipoylation via its role as an octanoyl/lipoyl carrier protein intermediate. The chain is Glycine cleavage system H protein from Geobacillus thermodenitrificans (strain NG80-2).